Reading from the N-terminus, the 358-residue chain is ATPase ASNA1 homolog (358 aa).

35-42 (KGGVGKTT) contacts ATP. Residue aspartate 64 is part of the active site. The ATP site is built by glutamate 235 and asparagine 262.

This sequence belongs to the arsA ATPase family. As to quaternary structure, homodimer.

The protein localises to the cytoplasm. The protein resides in the endoplasmic reticulum. Functionally, ATPase required for the post-translational delivery of tail-anchored (TA) proteins to the endoplasmic reticulum. Recognizes and selectively binds the transmembrane domain of TA proteins in the cytosol. This complex then targets to the endoplasmic reticulum by membrane-bound receptors, where the tail-anchored protein is released for insertion. This process is regulated by ATP binding and hydrolysis. ATP binding drives the homodimer towards the closed dimer state, facilitating recognition of newly synthesized TA membrane proteins. ATP hydrolysis is required for insertion. Subsequently, the homodimer reverts towards the open dimer state, lowering its affinity for the membrane-bound receptor, and returning it to the cytosol to initiate a new round of targeting. This Babesia bovis protein is ATPase ASNA1 homolog.